Here is a 619-residue protein sequence, read N- to C-terminus: Eukaryotic translation initiation factor 3 subunit D (619 aa).

The disordered stretch occupies residues 99-160 (QKQPHQRGRF…KWGARPPPKI (62 aa)). Positions 100–121 (KQPHQRGRFRGNLRNQRGRGRG) are enriched in basic residues. Residues 288–302 (EFDLLTVNETAIEPP) form an RNA gate region. The disordered stretch occupies residues 588-619 (TPAATETVATATTEATTPTTATKTTAPAAAQK).

It belongs to the eIF-3 subunit D family. In terms of assembly, component of the eukaryotic translation initiation factor 3 (eIF-3) complex.

The protein resides in the cytoplasm. Functionally, mRNA cap-binding component of the eukaryotic translation initiation factor 3 (eIF-3) complex, which is involved in protein synthesis of a specialized repertoire of mRNAs and, together with other initiation factors, stimulates binding of mRNA and methionyl-tRNAi to the 40S ribosome. The eIF-3 complex specifically targets and initiates translation of a subset of mRNAs involved in cell proliferation. In the eIF-3 complex, eif3d specifically recognizes and binds the 7-methylguanosine cap of a subset of mRNAs. The chain is Eukaryotic translation initiation factor 3 subunit D from Aedes aegypti (Yellowfever mosquito).